Here is a 66-residue protein sequence, read N- to C-terminus: Large ribosomal subunit protein bL35 (66 aa).

The protein belongs to the bacterial ribosomal protein bL35 family.

This is Large ribosomal subunit protein bL35 from Afipia carboxidovorans (strain ATCC 49405 / DSM 1227 / KCTC 32145 / OM5) (Oligotropha carboxidovorans).